A 46-amino-acid polypeptide reads, in one-letter code: Endochitinase 3 (46 aa).

Residues 1-21 (MTPQGNKPSSHDVITGRWTPS) form a disordered region.

It belongs to the glycosyl hydrolase 19 family. Chitinase class I subfamily.

The enzyme catalyses Random endo-hydrolysis of N-acetyl-beta-D-glucosaminide (1-&gt;4)-beta-linkages in chitin and chitodextrins.. Its function is as follows. Defense against chitin-containing fungal and bacterial pathogens. The chain is Endochitinase 3 from Arachis hypogaea (Peanut).